Here is a 131-residue protein sequence, read N- to C-terminus: Small ribosomal subunit protein bS6 (131 aa).

Positions 97–131 (TEASPMVKAKDERRRDVAEDLDEEEVDDVAEDSEE) are disordered. Residues 104–114 (KAKDERRRDVA) are compositionally biased toward basic and acidic residues. The segment covering 115–131 (EDLDEEEVDDVAEDSEE) has biased composition (acidic residues).

Belongs to the bacterial ribosomal protein bS6 family.

Binds together with bS18 to 16S ribosomal RNA. The chain is Small ribosomal subunit protein bS6 from Proteus mirabilis (strain HI4320).